We begin with the raw amino-acid sequence, 286 residues long: Energy-coupling factor transporter ATP-binding protein EcfA2 (286 aa).

An ABC transporter domain is found at 3 to 246 (IQFNQVSYIY…KTQLLKWHIE (244 aa)). Residue 40-47 (GQTGSGKS) coordinates ATP.

This sequence belongs to the ABC transporter superfamily. Energy-coupling factor EcfA family. Forms a stable energy-coupling factor (ECF) transporter complex composed of 2 membrane-embedded substrate-binding proteins (S component), 2 ATP-binding proteins (A component) and 2 transmembrane proteins (T component).

It is found in the cell membrane. ATP-binding (A) component of a common energy-coupling factor (ECF) ABC-transporter complex. Unlike classic ABC transporters this ECF transporter provides the energy necessary to transport a number of different substrates. In Staphylococcus epidermidis (strain ATCC 12228 / FDA PCI 1200), this protein is Energy-coupling factor transporter ATP-binding protein EcfA2.